Here is an 821-residue protein sequence, read N- to C-terminus: Leucine--tRNA ligase (821 aa).

A 'HIGH' region motif is present at residues 44–54 (PYPSGRIHMGH). The 'KMSKS' region signature appears at 589-593 (KMSKS). K592 contacts ATP.

This sequence belongs to the class-I aminoacyl-tRNA synthetase family.

It localises to the cytoplasm. The enzyme catalyses tRNA(Leu) + L-leucine + ATP = L-leucyl-tRNA(Leu) + AMP + diphosphate. This is Leucine--tRNA ligase from Campylobacter concisus (strain 13826).